The following is a 65-amino-acid chain: Putative beta-neurotoxin RjAa7 (65 aa).

An LCN-type CS-alpha/beta domain is found at 1–64; sequence KEGYPVGRDG…VWDSSTNKCG (64 aa). 4 cysteine pairs are disulfide-bonded: cysteine 11–cysteine 63, cysteine 15–cysteine 37, cysteine 22–cysteine 44, and cysteine 26–cysteine 46.

The protein belongs to the long (4 C-C) scorpion toxin superfamily. Sodium channel inhibitor family. Beta subfamily. Expressed by the venom gland.

It is found in the secreted. In terms of biological role, beta toxins bind voltage-independently at site-4 of sodium channels (Nav) and shift the voltage of activation toward more negative potentials thereby affecting sodium channel activation and promoting spontaneous and repetitive firing. The sequence is that of Putative beta-neurotoxin RjAa7 from Rhopalurus junceus (Caribbean blue scorpion).